The primary structure comprises 473 residues: Trehalose-6-phosphate synthase (473 aa).

Position 10 (arginine 10) interacts with D-glucose 6-phosphate. Position 21-22 (21-22 (GG)) interacts with UDP-alpha-D-glucose. D-glucose 6-phosphate contacts are provided by tyrosine 76 and aspartate 130. Arginine 262 and lysine 267 together coordinate UDP-alpha-D-glucose. Arginine 300 serves as a coordination point for D-glucose 6-phosphate. UDP-alpha-D-glucose is bound by residues phenylalanine 339 and 365–369 (LVAKE). The interval 454-473 (TPRSPERQQQNNVATFPKLA) is disordered.

This sequence belongs to the glycosyltransferase 20 family. In terms of assembly, homotetramer.

It carries out the reaction D-glucose 6-phosphate + UDP-alpha-D-glucose = alpha,alpha-trehalose 6-phosphate + UDP + H(+). It participates in glycan biosynthesis; trehalose biosynthesis. Functionally, probably involved in the osmoprotection via the biosynthesis of trehalose. Catalyzes the transfer of glucose from UDP-alpha-D-glucose (UDP-Glc) to D-glucose 6-phosphate (Glc-6-P) to form trehalose-6-phosphate. Acts with retention of the anomeric configuration of the UDP-sugar donor. This Salmonella paratyphi A (strain ATCC 9150 / SARB42) protein is Trehalose-6-phosphate synthase.